Reading from the N-terminus, the 493-residue chain is MECQRCPASARNPATVESRKEKFCDECFIKFVSTKQRKQMMKDEYFRNLFKVIYPFEKEGSVSKILLPLSLSDSGSLVMLDIVHDLLLEQTKQHNNRTGFTVDVLTVFTEENVSVIKERMESLINEKMSQLNKISNIFNVHFIDVNEFFNNASEVSTFIIDNENFEIFSKSKSVDDSNILTLKEILGKYCLNNSSRSDLISIIKTQLIKHFAYENGYNAIMWGHSMTKLSEVIISLVVKGKGSQIATFLDSESFDTLNNKPCKYKNLYPMKDLLSVEIESFLQIRNLAQFLINVEETNVKPNCLIARKSLPSLGQQKLVKNMTINEITNKYFQDIQNDYSNIISTVSRTADKLTQPKSSMAKPSQCQICQSKIYTNPSNWLNRITVTSPYPVETTEEKYLFKQWQDSKLGQSHTHYVELLNEIKQGASNSLDVEDGDVKLCYGCLILLNTSIKDKNLVWPKVDTMDITANATNNNKELSQILDQFEINSDGEE.

Position 489 is a phosphoserine (serine 489).

This sequence belongs to the CTU2/NCS2 family. As to quaternary structure, interacts with NCS6 and URM1. May act by forming a heterodimer with NCS6.

Its subcellular location is the cytoplasm. It participates in tRNA modification; 5-methoxycarbonylmethyl-2-thiouridine-tRNA biosynthesis. Functionally, plays a central role in 2-thiolation of mcm(5)S(2)U at tRNA wobble positions of tRNA(Lys), tRNA(Glu) and tRNA(Gln). May act by forming a heterodimer with NCS6 that ligates sulfur from thiocarboxylated URM1 onto the uridine of tRNAs at wobble position. Prior mcm(5) tRNA modification by the elongator complex is required for 2-thiolation. May also be involved in protein urmylation. The sequence is that of Cytoplasmic tRNA 2-thiolation protein 2 from Saccharomyces cerevisiae (strain AWRI1631) (Baker's yeast).